The following is a 484-amino-acid chain: tRNA sulfurtransferase (484 aa).

In terms of domain architecture, THUMP spans 63-167; the sequence is REMIERLTCT…LDRLFVIHRQ (105 aa). ATP contacts are provided by residues 185–186, lysine 267, glycine 289, and glutamine 298; that span reads LM. A disulfide bond links cysteine 346 and cysteine 457. A Rhodanese domain is found at 405 to 483; the sequence is VLPGQIVIDI…GHTNVRVYRP (79 aa). Catalysis depends on cysteine 457, which acts as the Cysteine persulfide intermediate.

The protein belongs to the ThiI family.

It is found in the cytoplasm. The catalysed reaction is [ThiI sulfur-carrier protein]-S-sulfanyl-L-cysteine + a uridine in tRNA + 2 reduced [2Fe-2S]-[ferredoxin] + ATP + H(+) = [ThiI sulfur-carrier protein]-L-cysteine + a 4-thiouridine in tRNA + 2 oxidized [2Fe-2S]-[ferredoxin] + AMP + diphosphate. It carries out the reaction [ThiS sulfur-carrier protein]-C-terminal Gly-Gly-AMP + S-sulfanyl-L-cysteinyl-[cysteine desulfurase] + AH2 = [ThiS sulfur-carrier protein]-C-terminal-Gly-aminoethanethioate + L-cysteinyl-[cysteine desulfurase] + A + AMP + 2 H(+). It functions in the pathway cofactor biosynthesis; thiamine diphosphate biosynthesis. Its function is as follows. Catalyzes the ATP-dependent transfer of a sulfur to tRNA to produce 4-thiouridine in position 8 of tRNAs, which functions as a near-UV photosensor. Also catalyzes the transfer of sulfur to the sulfur carrier protein ThiS, forming ThiS-thiocarboxylate. This is a step in the synthesis of thiazole, in the thiamine biosynthesis pathway. The sulfur is donated as persulfide by IscS. This is tRNA sulfurtransferase from Pseudomonas aeruginosa (strain LESB58).